The primary structure comprises 284 residues: Ribosomal RNA small subunit methyltransferase A (284 aa).

6 residues coordinate S-adenosyl-L-methionine: His-23, Leu-25, Gly-50, Glu-71, Asp-92, and Asn-121.

Belongs to the class I-like SAM-binding methyltransferase superfamily. rRNA adenine N(6)-methyltransferase family. RsmA subfamily.

Its subcellular location is the cytoplasm. The enzyme catalyses adenosine(1518)/adenosine(1519) in 16S rRNA + 4 S-adenosyl-L-methionine = N(6)-dimethyladenosine(1518)/N(6)-dimethyladenosine(1519) in 16S rRNA + 4 S-adenosyl-L-homocysteine + 4 H(+). Functionally, specifically dimethylates two adjacent adenosines (A1518 and A1519) in the loop of a conserved hairpin near the 3'-end of 16S rRNA in the 30S particle. May play a critical role in biogenesis of 30S subunits. The chain is Ribosomal RNA small subunit methyltransferase A from Verminephrobacter eiseniae (strain EF01-2).